The chain runs to 229 residues: Leucyl/phenylalanyl-tRNA--protein transferase (229 aa).

This sequence belongs to the L/F-transferase family.

Its subcellular location is the cytoplasm. It catalyses the reaction N-terminal L-lysyl-[protein] + L-leucyl-tRNA(Leu) = N-terminal L-leucyl-L-lysyl-[protein] + tRNA(Leu) + H(+). It carries out the reaction N-terminal L-arginyl-[protein] + L-leucyl-tRNA(Leu) = N-terminal L-leucyl-L-arginyl-[protein] + tRNA(Leu) + H(+). The enzyme catalyses L-phenylalanyl-tRNA(Phe) + an N-terminal L-alpha-aminoacyl-[protein] = an N-terminal L-phenylalanyl-L-alpha-aminoacyl-[protein] + tRNA(Phe). Functionally, functions in the N-end rule pathway of protein degradation where it conjugates Leu, Phe and, less efficiently, Met from aminoacyl-tRNAs to the N-termini of proteins containing an N-terminal arginine or lysine. This chain is Leucyl/phenylalanyl-tRNA--protein transferase, found in Desulforapulum autotrophicum (strain ATCC 43914 / DSM 3382 / VKM B-1955 / HRM2) (Desulfobacterium autotrophicum).